Consider the following 110-residue polypeptide: MTTEDHSYKDKKVISIGIVSELTGLSVRQIRYYEERKLIYPQRSSRGTRKYSFADVERLMDIANKREDGVQTAEILKDMRKKEQMLKNDPQVRKKMLEGQLNAHFRYKNR.

An HTH merR-type domain is found at 13 to 81 (VISIGIVSEL…TAEILKDMRK (69 aa)). Positions 16-35 (IGIVSELTGLSVRQIRYYEE) form a DNA-binding region, H-T-H motif.

In terms of assembly, homodimer. Under conditions of nitrogen excess, TnrA forms a stable complex with feedback-inhibited GlnA. Interacts with GlnK-AmtB complex.

It is found in the cell membrane. Under conditions of nitrogen excess, the DNA-binding activity is inhibited by the formation of a stable complex with feedback-inhibited GlnA. The presence of glutamine and AMP increases the inhibitory activity of glutamine synthetase by more than 1000-fold. Its function is as follows. Transcription regulator that actives the transcription of genes required for nitrogen assimilation such as nrgAB (ammonium transport), nasABCDEF (nitrate/nitrite assimilation), ureABC (urea degradation) and gabP (GABA transport), during nitrogen limitation. Also represses glnRA and gltAB in the absence of ammonium. On the contrary of the MerR members, which require longer DNA sites for high-affinity binding, TnrA requires a DNA sequence of 17 nucleotides as minimal binding site. The polypeptide is HTH-type transcriptional regulator TnrA (Bacillus subtilis (strain 168)).